Here is a 353-residue protein sequence, read N- to C-terminus: Photosystem II protein D1 (353 aa).

Thr-2 bears the N-acetylthreonine mark. Residue Thr-2 is modified to Phosphothreonine. 3 helical membrane passes run 29–46 (YIGW…TATS), 118–133 (HFLL…EWEL), and 142–156 (WIAV…AATA). His-118 contacts chlorophyll a. Tyr-126 contributes to the pheophytin a binding site. Residues Asp-170 and Glu-189 each contribute to the [CaMn4O5] cluster site. Residues 197 to 218 (FHMLGVAGVFGGSLFSAMHGSL) form a helical membrane-spanning segment. Chlorophyll a is bound at residue His-198. Residues His-215 and 264 to 265 (SF) contribute to the a quinone site. His-215 contributes to the Fe cation binding site. Fe cation is bound at residue His-272. The chain crosses the membrane as a helical span at residues 274-288 (FLAAWPVVGIWFTAL). 4 residues coordinate [CaMn4O5] cluster: His-332, Glu-333, Asp-342, and Ala-344. A propeptide spanning residues 345 to 353 (AVEAPSTNG) is cleaved from the precursor.

The protein belongs to the reaction center PufL/M/PsbA/D family. In terms of assembly, PSII is composed of 1 copy each of membrane proteins PsbA, PsbB, PsbC, PsbD, PsbE, PsbF, PsbH, PsbI, PsbJ, PsbK, PsbL, PsbM, PsbT, PsbX, PsbY, PsbZ, Psb30/Ycf12, at least 3 peripheral proteins of the oxygen-evolving complex and a large number of cofactors. It forms dimeric complexes. The D1/D2 heterodimer binds P680, chlorophylls that are the primary electron donor of PSII, and subsequent electron acceptors. It shares a non-heme iron and each subunit binds pheophytin, quinone, additional chlorophylls, carotenoids and lipids. D1 provides most of the ligands for the Mn4-Ca-O5 cluster of the oxygen-evolving complex (OEC). There is also a Cl(-1) ion associated with D1 and D2, which is required for oxygen evolution. The PSII complex binds additional chlorophylls, carotenoids and specific lipids. is required as a cofactor. In terms of processing, tyr-161 forms a radical intermediate that is referred to as redox-active TyrZ, YZ or Y-Z. Post-translationally, C-terminally processed by CTPA; processing is essential to allow assembly of the oxygen-evolving complex and thus photosynthetic growth.

The protein localises to the plastid. The protein resides in the chloroplast thylakoid membrane. It carries out the reaction 2 a plastoquinone + 4 hnu + 2 H2O = 2 a plastoquinol + O2. Functionally, photosystem II (PSII) is a light-driven water:plastoquinone oxidoreductase that uses light energy to abstract electrons from H(2)O, generating O(2) and a proton gradient subsequently used for ATP formation. It consists of a core antenna complex that captures photons, and an electron transfer chain that converts photonic excitation into a charge separation. The D1/D2 (PsbA/PsbD) reaction center heterodimer binds P680, the primary electron donor of PSII as well as several subsequent electron acceptors. This chain is Photosystem II protein D1, found in Oenothera parviflora (Small-flowered evening primrose).